The chain runs to 583 residues: Pentatricopeptide repeat-containing protein At2g33760 (583 aa).

9 PPR repeats span residues 71–105 (DDFL…NVSP), 106–140 (SNYT…GFGL), 141–171 (DTYV…MPEK), 172–206 (SIVA…GFEP), 207–241 (DSAT…GLDL), 242–276 (NVKL…NVAA), 277–303 (WTAM…MEDD), 309–339 (NNVT…MTKS), and 345–379 (GVEH…GKAT). The tract at residues 383–458 (LWTAMLGACK…QVGYSVIEVE (76 aa)) is type E motif. The interval 459 to 489 (NKTYMFSMGDESHQETGEIYRYLETLISRCK) is type E(+) motif. The tract at residues 490–583 (EIGYAPVSEE…NGSCSCLDYW (94 aa)) is type DYW motif.

Belongs to the PPR family. PCMP-H subfamily.

The chain is Pentatricopeptide repeat-containing protein At2g33760 (PCMP-H6) from Arabidopsis thaliana (Mouse-ear cress).